A 135-amino-acid polypeptide reads, in one-letter code: Ribonuclease P protein component (135 aa).

Positions 115-135 (TNETVSPVSDTPLPQHERGSQ) are disordered.

Belongs to the RnpA family. Consists of a catalytic RNA component (M1 or rnpB) and a protein subunit.

It catalyses the reaction Endonucleolytic cleavage of RNA, removing 5'-extranucleotides from tRNA precursor.. Functionally, RNaseP catalyzes the removal of the 5'-leader sequence from pre-tRNA to produce the mature 5'-terminus. It can also cleave other RNA substrates such as 4.5S RNA. The protein component plays an auxiliary but essential role in vivo by binding to the 5'-leader sequence and broadening the substrate specificity of the ribozyme. This Chloroflexus aurantiacus (strain ATCC 29366 / DSM 635 / J-10-fl) protein is Ribonuclease P protein component.